Consider the following 1146-residue polypeptide: uncharacterized protein (1146 aa).

This is an uncharacterized protein from Saccharum officinarum (Sugarcane).